The primary structure comprises 701 residues: Elongation factor G (701 aa).

One can recognise a tr-type G domain in the interval 11–287 (SRVRNFGIMA…AVVDYLPSPL (277 aa)). GTP contacts are provided by residues 20-27 (AHIDAGKT), 84-88 (DTPGH), and 138-141 (NKMD).

The protein belongs to the TRAFAC class translation factor GTPase superfamily. Classic translation factor GTPase family. EF-G/EF-2 subfamily.

It is found in the cytoplasm. Catalyzes the GTP-dependent ribosomal translocation step during translation elongation. During this step, the ribosome changes from the pre-translocational (PRE) to the post-translocational (POST) state as the newly formed A-site-bound peptidyl-tRNA and P-site-bound deacylated tRNA move to the P and E sites, respectively. Catalyzes the coordinated movement of the two tRNA molecules, the mRNA and conformational changes in the ribosome. The chain is Elongation factor G (fusA) from Mycobacterium tuberculosis (strain CDC 1551 / Oshkosh).